The sequence spans 88 residues: Phosphocarrier protein HPr (88 aa).

The region spanning 1-88 (MAEKTFKVVS…DTLAKEGLAE (88 aa)) is the HPr domain. Position 12 is a phosphoserine (serine 12). The Pros-phosphohistidine intermediate role is filled by histidine 15. A Phosphoserine; by HPrK/P modification is found at serine 46.

Belongs to the HPr family.

It is found in the cytoplasm. With respect to regulation, phosphorylation on Ser-46 inhibits the phosphoryl transfer from enzyme I to HPr. Functionally, general (non sugar-specific) component of the phosphoenolpyruvate-dependent sugar phosphotransferase system (sugar PTS). This major carbohydrate active-transport system catalyzes the phosphorylation of incoming sugar substrates concomitantly with their translocation across the cell membrane. The phosphoryl group from phosphoenolpyruvate (PEP) is transferred to the phosphoryl carrier protein HPr by enzyme I. Phospho-HPr then transfers it to the PTS EIIA domain. Its function is as follows. P-Ser-HPr interacts with the catabolite control protein A (CcpA), forming a complex that binds to DNA at the catabolite response elements cre, operator sites preceding a large number of catabolite-regulated genes. Thus, P-Ser-HPr is a corepressor in carbon catabolite repression (CCR), a mechanism that allows bacteria to coordinate and optimize the utilization of available carbon sources. P-Ser-HPr also plays a role in inducer exclusion, in which it probably interacts with several non-PTS permeases and inhibits their transport activity. The sequence is that of Phosphocarrier protein HPr (ptsH) from Geobacillus stearothermophilus (Bacillus stearothermophilus).